The chain runs to 1439 residues: ABC transporter G family member 14 (1439 aa).

The segment covering 1–17 (MEENSNKFEQELKEIGQ) has biased composition (basic and acidic residues). Residues 1–21 (MEENSNKFEQELKEIGQDRNQ) are disordered. One can recognise an ABC transporter 1 domain in the interval 117–370 (FSILNFFKPS…FMSLGFDCEP (254 aa)). One can recognise an ABC transmembrane type-2 1 domain in the interval 475–700 (LNDKFGLFTK…GSEFDAYRIC (226 aa)). 6 consecutive transmembrane segments (helical) span residues 479–499 (FGLF…SSVF), 516–536 (ILSA…MTFI), 564–584 (IPFT…MFGL), 589–609 (GKFF…TALF), 614–634 (YLCP…IFML), and 734–754 (IIVY…MEYI). One can recognise an ABC transporter 2 domain in the interval 805–1049 (FTWQNIRYTV…LTSYFERHGV (245 aa)). 841–848 (GSSGAGKT) is a binding site for ATP. Residues 1141–1366 (YYTYGSFVQS…YNTCQNYTSA (226 aa)) form the ABC transmembrane type-2 2 domain. 6 helical membrane passes run 1144-1164 (YGSF…FWNL), 1175-1195 (IFFI…VMPQ), 1217-1237 (FAIS…TIFF), 1256-1276 (FYFW…GQAV), 1283-1303 (MFFA…FSGV), and 1413-1433 (VGII…FVYL).

This sequence belongs to the ABC transporter superfamily. ABCG family. PDR (TC 3.A.1.205) subfamily.

The protein resides in the membrane. The sequence is that of ABC transporter G family member 14 (abcG14) from Dictyostelium discoideum (Social amoeba).